A 308-amino-acid polypeptide reads, in one-letter code: Elongation factor Ts (308 aa).

The involved in Mg(2+) ion dislocation from EF-Tu stretch occupies residues 80 to 83; the sequence is TDFV.

This sequence belongs to the EF-Ts family.

It localises to the cytoplasm. Functionally, associates with the EF-Tu.GDP complex and induces the exchange of GDP to GTP. It remains bound to the aminoacyl-tRNA.EF-Tu.GTP complex up to the GTP hydrolysis stage on the ribosome. This chain is Elongation factor Ts, found in Rhodopseudomonas palustris (strain ATCC BAA-98 / CGA009).